The chain runs to 204 residues: dITP/XTP pyrophosphatase (204 aa).

Residue Thr14–Lys19 coordinates substrate. Residues Glu46 and Asp75 each contribute to the Mg(2+) site. Asp75 serves as the catalytic Proton acceptor. Substrate-binding positions include Ser76, Phe161–Asp164, Lys184, and His189–Arg190.

The protein belongs to the HAM1 NTPase family. Homodimer. The cofactor is Mg(2+).

The enzyme catalyses XTP + H2O = XMP + diphosphate + H(+). It catalyses the reaction dITP + H2O = dIMP + diphosphate + H(+). It carries out the reaction ITP + H2O = IMP + diphosphate + H(+). Pyrophosphatase that catalyzes the hydrolysis of nucleoside triphosphates to their monophosphate derivatives, with a high preference for the non-canonical purine nucleotides XTP (xanthosine triphosphate), dITP (deoxyinosine triphosphate) and ITP. Seems to function as a house-cleaning enzyme that removes non-canonical purine nucleotides from the nucleotide pool, thus preventing their incorporation into DNA/RNA and avoiding chromosomal lesions. This chain is dITP/XTP pyrophosphatase, found in Ruegeria pomeroyi (strain ATCC 700808 / DSM 15171 / DSS-3) (Silicibacter pomeroyi).